The primary structure comprises 133 residues: U6 snRNA-associated Sm-like protein LSm1 (133 aa).

The Sm domain occupies Pro-5 to Glu-80. Position 123 is a phosphoserine (Ser-123). Phosphothreonine is present on Thr-129.

Belongs to the snRNP Sm proteins family. As to quaternary structure, interacts with SLBP; interaction with SLBP occurs when histone mRNA is being rapidly degraded during the S phase. LSm subunits form a heteromer with a donut shape.

The protein resides in the cytoplasm. The protein localises to the P-body. In terms of biological role, plays a role in the degradation of histone mRNAs, the only eukaryotic mRNAs that are not polyadenylated. Probably also part of an LSm subunits-containing complex involved in the general process of mRNA degradation. This is U6 snRNA-associated Sm-like protein LSm1 (LSM1) from Homo sapiens (Human).